The sequence spans 97 residues: Protein RnfH (97 aa).

This sequence belongs to the UPF0125 (RnfH) family.

The chain is Protein RnfH from Paramagnetospirillum magneticum (strain ATCC 700264 / AMB-1) (Magnetospirillum magneticum).